The following is a 576-amino-acid chain: Septation ring formation regulator EzrA (576 aa).

The Extracellular segment spans residues 1 to 7; it reads MSSTVII. Residues 8–26 form a helical membrane-spanning segment; it reads LIVVLLVILVAFYAFAILM. The Cytoplasmic segment spans residues 27-576; the sequence is RKKTEDRILA…FKNKPTPDYL (550 aa). 3 coiled-coil regions span residues 105 to 134, 254 to 305, and 356 to 402; these read RARESVADSEAQIEMMEGDVEGIRQGVAQL, ENVN…FERE, and GYQE…IEKN.

Belongs to the EzrA family.

The protein resides in the cell membrane. Negative regulator of FtsZ ring formation; modulates the frequency and position of FtsZ ring formation. Inhibits FtsZ ring formation at polar sites. Interacts either with FtsZ or with one of its binding partners to promote depolymerization. The chain is Septation ring formation regulator EzrA from Lactococcus lactis subsp. cremoris (strain MG1363).